Consider the following 262-residue polypeptide: Small ribosomal subunit protein eS1y (262 aa).

Positions 1–18 (MAVGKNKRISKGRKGGKK) are enriched in basic residues. The disordered stretch occupies residues 1–21 (MAVGKNKRISKGRKGGKKKAV).

Belongs to the eukaryotic ribosomal protein eS1 family. As to quaternary structure, component of the small ribosomal subunit. Mature ribosomes consist of a small (40S) and a large (60S) subunit. The 40S subunit contains about 33 different proteins and 1 molecule of RNA (18S). The 60S subunit contains about 49 different proteins and 3 molecules of RNA (25S, 5.8S and 5S).

It localises to the cytoplasm. The polypeptide is Small ribosomal subunit protein eS1y (Arabidopsis thaliana (Mouse-ear cress)).